We begin with the raw amino-acid sequence, 564 residues long: Ovochymase-2 (564 aa).

An N-terminal signal peptide occupies residues 1–22 (MLISRNKLILLLGIVFFERGKS). The propeptide at 23–51 (ATLSLPKAPSCGQSLVKVQPWNYFNIFSR) is activation peptide. In terms of domain architecture, Peptidase S1 spans 52–299 (ILGGSQVEKG…VLPWIHEHIQ (248 aa)). Cys77 and Cys93 are disulfide-bonded. Catalysis depends on His92, which acts as the Charge relay system. Residue Asn104 is glycosylated (N-linked (GlcNAc...) asparagine). A Ca(2+)-binding site is contributed by Glu119. Asp142 functions as the Charge relay system in the catalytic mechanism. 5 disulfide bridges follow: Cys176/Cys246, Cys207/Cys225, Cys236/Cys265, Cys311/Cys341, and Cys365/Cys384. Ser240 acts as the Charge relay system in catalysis. 2 consecutive CUB domains span residues 311-421 (CSEQ…YKAL) and 431-543 (CSYL…VSFI). Asn415 and Asn451 each carry an N-linked (GlcNAc...) asparagine glycan. 2 disulfides stabilise this stretch: Cys431/Cys458 and Cys485/Cys506. N-linked (GlcNAc...) asparagine glycosylation occurs at Asn530.

It belongs to the peptidase S1 family.

The protein resides in the secreted. Functionally, may be required for sperm ADAM3 processing and consequential sperm fertilizing ability. In vitro, has an endopeptidase activity. The polypeptide is Ovochymase-2 (Homo sapiens (Human)).